Consider the following 456-residue polypeptide: Adenylosuccinate synthetase isozyme 1 (456 aa).

A disordered region spans residues Met-1 to Asn-30. Residues Gly-41–Lys-47 and Gly-69–Thr-71 each bind GTP. Catalysis depends on Asp-42, which acts as the Proton acceptor. Mg(2+) contacts are provided by Asp-42 and Gly-69. Asp-42 contributes to the substrate binding site. IMP contacts are provided by residues Asp-42–Lys-45 and Asn-67–His-70. Residue His-70 is the Proton donor of the active site. Ser-130 is modified (phosphoserine). Residues Thr-162, Arg-176, Asn-255, Thr-270, and Arg-334 each coordinate IMP. Residue Val-330 to Arg-336 participates in substrate binding. GTP-binding positions include Arg-336, Lys-362 to Asp-364, and Gly-444 to Lys-447.

Belongs to the adenylosuccinate synthetase family. As to quaternary structure, homodimer. It depends on Mg(2+) as a cofactor.

Its subcellular location is the cytoplasm. It catalyses the reaction IMP + L-aspartate + GTP = N(6)-(1,2-dicarboxyethyl)-AMP + GDP + phosphate + 2 H(+). It functions in the pathway purine metabolism; AMP biosynthesis via de novo pathway; AMP from IMP: step 1/2. Its function is as follows. Component of the purine nucleotide cycle (PNC), which interconverts IMP and AMP to regulate the nucleotide levels in various tissues, and which contributes to glycolysis and ammoniagenesis. Catalyzes the first committed step in the biosynthesis of AMP from IMP. The chain is Adenylosuccinate synthetase isozyme 1 (adss1) from Danio rerio (Zebrafish).